The following is a 244-amino-acid chain: Inactive chemokine-binding protein (244 aa).

A disordered region spans residues 1–79 (MHVPASLQQS…STSVEDVDPP (79 aa)). Residues 37–53 (QDQTPTNDKICQSVTEI) are compositionally biased toward polar residues. The span at 54–77 (TESESDPDPEVESEDDSTSVEDVD) shows a compositional bias: acidic residues.

The protein belongs to the orthopoxvirus OPG001 family.

It localises to the host cytoplasm. In terms of biological role, the protein is truncated in this vaccinal strain and presumably inactive, because the lack of signal peptide prevents the protein of being secreted. In the wild-type viruses inhibits host immune defense by binding to host chemokines. Binds host CC chemokines (beta chemokines) such as RANTES with high affinity, but not CXC or C chemokines (alpha and gamma chemokines). The sequence is that of Inactive chemokine-binding protein (OPG001) from Vaccinia virus (strain Western Reserve) (VACV).